The following is a 181-amino-acid chain: Protein Syd (181 aa).

Belongs to the Syd family.

It localises to the cell inner membrane. Interacts with the SecY protein in vivo. May bind preferentially to an uncomplexed state of SecY, thus functioning either as a chelating agent for excess SecY in the cell or as a regulatory factor that negatively controls the translocase function. The chain is Protein Syd from Klebsiella pneumoniae subsp. pneumoniae (strain ATCC 700721 / MGH 78578).